The primary structure comprises 545 residues: Inosine-5'-monophosphate dehydrogenase (545 aa).

CBS domains follow at residues 138-194 and 201-258; these read MITD…DYDT and MTKE…PDAT. NAD(+) contacts are provided by residues Asp295 and 347-349; that span reads GIG. The K(+) site is built by Gly349 and Gly351. Position 352 (Ser352) interacts with IMP. Cys354 lines the K(+) pocket. The Thioimidate intermediate role is filled by Cys354. Residues 387–389, 410–411, and 434–438 contribute to the IMP site; these read DGG, GG, and YRGMG. Arg455 acts as the Proton acceptor in catalysis. An IMP-binding site is contributed by Glu470. Residues Glu524, Ser525, and His526 each coordinate K(+).

It belongs to the IMPDH/GMPR family. Homotetramer. K(+) is required as a cofactor.

The catalysed reaction is IMP + NAD(+) + H2O = XMP + NADH + H(+). It participates in purine metabolism; XMP biosynthesis via de novo pathway; XMP from IMP: step 1/1. Mycophenolic acid (MPA) is a non-competitive inhibitor that prevents formation of the closed enzyme conformation by binding to the same site as the amobile flap. In contrast, mizoribine monophosphate (MZP) is a competitive inhibitor that induces the closed conformation. MPA is a potent inhibitor of mammalian IMPDHs but a poor inhibitor of the bacterial enzymes. MZP is a more potent inhibitor of bacterial IMPDH. Catalyzes the conversion of inosine 5'-phosphate (IMP) to xanthosine 5'-phosphate (XMP), the first committed and rate-limiting step in the de novo synthesis of guanine nucleotides, and therefore plays an important role in the regulation of cell growth. This Bifidobacterium longum (strain NCC 2705) protein is Inosine-5'-monophosphate dehydrogenase.